Consider the following 85-residue polypeptide: Protein AC4 (85 aa).

Residue G2 is the site of N-myristoyl glycine; by host attachment. A disordered region spans residues 44–63 (RAPMSNPTSRKTGTVSNGDC). The segment covering 46 to 62 (PMSNPTSRKTGTVSNGD) has biased composition (polar residues).

Belongs to the geminiviridae protein AC4/C4 family.

Its subcellular location is the host cell membrane. Functionally, pathogenicity determinant. May act as a suppressor of RNA-mediated gene silencing, also known as post-transcriptional gene silencing (PTGS), a mechanism of plant viral defense that limits the accumulation of viral RNAs. The sequence is that of Protein AC4 from Potato yellow mosaic virus (isolate Venezuela) (PYMV).